Here is a 1178-residue protein sequence, read N- to C-terminus: DNA-directed RNA polymerase subunit beta (1178 aa).

The interval 1 to 37 (MLEGCILPDFGQSKTDVSPSQSRPQSSPNNSVPGAPN) is disordered. Residues 17–33 (VSPSQSRPQSSPNNSVP) are compositionally biased toward low complexity.

It belongs to the RNA polymerase beta chain family. In terms of assembly, the RNAP catalytic core consists of 2 alpha, 1 beta, 1 beta' and 1 omega subunit. When a sigma factor is associated with the core the holoenzyme is formed, which can initiate transcription.

It carries out the reaction RNA(n) + a ribonucleoside 5'-triphosphate = RNA(n+1) + diphosphate. In terms of biological role, DNA-dependent RNA polymerase catalyzes the transcription of DNA into RNA using the four ribonucleoside triphosphates as substrates. This is DNA-directed RNA polymerase subunit beta from Mycobacterium leprae (strain Br4923).